Reading from the N-terminus, the 768-residue chain is Gene 24 protein (768 aa).

The tract at residues 102 to 125 (EGEGEREVDEAAAKEEPGNNRIGT) is disordered. The span at 104 to 119 (EGEREVDEAAAKEEPG) shows a compositional bias: basic and acidic residues.

Belongs to the herpesviridae UL87 family.

The sequence is that of Gene 24 protein (24) from Equine herpesvirus 2 (strain 86/87) (EHV-2).